We begin with the raw amino-acid sequence, 593 residues long: Histone-arginine methyltransferase CARMER (593 aa).

The SAM-dependent MTase PRMT-type domain maps to 122–429 (ASQYFQFYGY…QRQSYDVEMD (308 aa)). S-adenosyl-L-methionine is bound by residues glutamine 135, arginine 144, glycine 168, glutamate 190, glutamate 219, and threonine 247. Arginine 482 carries the asymmetric dimethylarginine; by autocatalysis modification. The interval 521–540 (LISSTGRQQSQQQTTPAQPL) is disordered. Over residues 523–535 (SSTGRQQSQQQTT) the composition is skewed to low complexity.

The protein belongs to the class I-like SAM-binding methyltransferase superfamily. Protein arginine N-methyltransferase family. In terms of assembly, homodimer. The dimethylated protein is the major form.

The protein localises to the cytoplasm. The protein resides in the nucleus. The enzyme catalyses L-arginyl-[protein] + 2 S-adenosyl-L-methionine = N(omega),N(omega)-dimethyl-L-arginyl-[protein] + 2 S-adenosyl-L-homocysteine + 2 H(+). Functionally, methylates (mono- and asymmetric dimethylation) the guanidino nitrogens of arginyl residues in proteins. May methylate histone H3 at 'Arg-17' and activate transcription via chromatin remodeling. This is Histone-arginine methyltransferase CARMER from Aedes aegypti (Yellowfever mosquito).